The sequence spans 230 residues: N-(5'-phosphoribosyl)anthranilate isomerase (230 aa).

It belongs to the TrpF family.

The catalysed reaction is N-(5-phospho-beta-D-ribosyl)anthranilate = 1-(2-carboxyphenylamino)-1-deoxy-D-ribulose 5-phosphate. It participates in amino-acid biosynthesis; L-tryptophan biosynthesis; L-tryptophan from chorismate: step 3/5. The protein is N-(5'-phosphoribosyl)anthranilate isomerase of Thermosynechococcus vestitus (strain NIES-2133 / IAM M-273 / BP-1).